Here is a 396-residue protein sequence, read N- to C-terminus: Elongation factor Tu (396 aa).

One can recognise a tr-type G domain in the interval 10–206 (KPHVNVGTIG…VLDTYIPEPE (197 aa)). The G1 stretch occupies residues 19 to 26 (GHVDHGKT). 19-26 (GHVDHGKT) serves as a coordination point for GTP. Mg(2+) is bound at residue Thr-26. A G2 region spans residues 60–64 (GITIN). The G3 stretch occupies residues 81-84 (DCPG). GTP is bound by residues 81–85 (DCPGH) and 136–139 (NKCD). A G4 region spans residues 136 to 139 (NKCD). The G5 stretch occupies residues 174–176 (SAT).

Belongs to the TRAFAC class translation factor GTPase superfamily. Classic translation factor GTPase family. EF-Tu/EF-1A subfamily. Monomer.

The protein localises to the cytoplasm. It carries out the reaction GTP + H2O = GDP + phosphate + H(+). Its function is as follows. GTP hydrolase that promotes the GTP-dependent binding of aminoacyl-tRNA to the A-site of ribosomes during protein biosynthesis. The protein is Elongation factor Tu of Psychrobacter arcticus (strain DSM 17307 / VKM B-2377 / 273-4).